The following is a 377-amino-acid chain: MKFEKLGQSGRARRGRLTLEHGVVETPVFMPVGTYGTVKGMLPRDIEDIQAQIILGNTFHLYLRPGLEVIKQHGGLHDFIKWNKPILTDSGGFQVFSLGAMRKIKEEGVTFRSPIDGSKVFLSPEISMEIQHVLNSDIVMIFDECTPYPATHEEAQKSLQLSLRWAKRCKTHHHDELKNKNALFGIIQGGMYEDLRDESLNGLLEIGFDGYAIGGLSVGEPKEEMIKVLDYLPNKMPHDKPRYLMGVGKPEDIVEAVRRGVDMFDCVMPTRNARNGHYFVTDGLVRIRNSKYRHDQGPLDPHCDCYTCKNFTRAYLFHLEKCGEMLASMLGTIHNLRYYQRLTEGMRDALDNGTFDEFVQDFYARRGLEVPPCPVDE.

The Proton acceptor role is filled by D89. Substrate-binding positions include 89-93 (DSGGF), D143, Q188, and G215. The tract at residues 246–252 (GVGKPED) is RNA binding. D265 acts as the Nucleophile in catalysis. An RNA binding; important for wobble base 34 recognition region spans residues 270-274 (TRNAR). C303, C305, C308, and H334 together coordinate Zn(2+).

Belongs to the queuine tRNA-ribosyltransferase family. In terms of assembly, homodimer. Within each dimer, one monomer is responsible for RNA recognition and catalysis, while the other monomer binds to the replacement base PreQ1. It depends on Zn(2+) as a cofactor.

The catalysed reaction is 7-aminomethyl-7-carbaguanine + guanosine(34) in tRNA = 7-aminomethyl-7-carbaguanosine(34) in tRNA + guanine. It participates in tRNA modification; tRNA-queuosine biosynthesis. Catalyzes the base-exchange of a guanine (G) residue with the queuine precursor 7-aminomethyl-7-deazaguanine (PreQ1) at position 34 (anticodon wobble position) in tRNAs with GU(N) anticodons (tRNA-Asp, -Asn, -His and -Tyr). Catalysis occurs through a double-displacement mechanism. The nucleophile active site attacks the C1' of nucleotide 34 to detach the guanine base from the RNA, forming a covalent enzyme-RNA intermediate. The proton acceptor active site deprotonates the incoming PreQ1, allowing a nucleophilic attack on the C1' of the ribose to form the product. After dissociation, two additional enzymatic reactions on the tRNA convert PreQ1 to queuine (Q), resulting in the hypermodified nucleoside queuosine (7-(((4,5-cis-dihydroxy-2-cyclopenten-1-yl)amino)methyl)-7-deazaguanosine). In Acinetobacter baumannii (strain ACICU), this protein is Queuine tRNA-ribosyltransferase.